The sequence spans 126 residues: MEVIEGLYYSKDHEWVKVEGDKAYIGITDYAQHSLGNIVYIELPEVGAELSAGDVLGVVESVKAASDVYTPVDGKVLEVNNAIVDDPSLVNNDPYGSWMALVELKDKSQLDNLMTAEEYKKFLDEE.

Positions 22–103 (KAYIGITDYA…PYGSWMALVE (82 aa)) constitute a Lipoyl-binding domain. Lysine 63 is subject to N6-lipoyllysine.

It belongs to the GcvH family. As to quaternary structure, the glycine cleavage system is composed of four proteins: P, T, L and H. Requires (R)-lipoate as cofactor.

Functionally, the glycine cleavage system catalyzes the degradation of glycine. The H protein shuttles the methylamine group of glycine from the P protein to the T protein. In Thermoanaerobacter pseudethanolicus (strain ATCC 33223 / 39E) (Clostridium thermohydrosulfuricum), this protein is Glycine cleavage system H protein.